We begin with the raw amino-acid sequence, 5478 residues long: Mucin-12 (5478 aa).

The N-terminal stretch at 1–16 is a signal peptide; the sequence is MLVIWILTLALRLCAS. Topologically, residues 17–5380 are extracellular; the sequence is VTTVTPEGSA…EFNIAKSLVY (5364 aa). 3 N-linked (GlcNAc...) asparagine glycosylation sites follow: asparagine 154, asparagine 170, and asparagine 176. Residues 212-737 are disordered; sequence LDSSTNSGHS…GSTETTLLPD (526 aa). Residues 222-240 form repeat 1; the sequence is EESTVSHSGPGATGTTLFP. Residues 222–4761 form a 28 X 19 AA approximate tandem repeats of E-E-S-X-X-X-H-X-X-P-X-X-T-X-T-X-X-X-P region; that stretch reads EESTVSHSGP…PGSTQTMHFP (4540 aa). Composition is skewed to polar residues over residues 226–246, 255–288, 296–313, and 325–342; these read VSHS…SATS, SPIT…SSPR, PART…TSHS, and DSTT…SHSI. The span at 343–366 shows a compositional bias: low complexity; it reads PGSTDTTLSPGTTTPSSLGPESTT. Polar residues predominate over residues 367 to 387; it reads FHSSPGYTKTTRLPDNTTTSG. Residue asparagine 382 is glycosylated (N-linked (GlcNAc...) asparagine). A compositionally biased stretch (low complexity) spans 396 to 413; the sequence is HSSTGSPHTTLSPSSSTT. The segment covering 419-440 has biased composition (polar residues); that stretch reads TTFQSWPSSKDTSPAPSGTTSA. Composition is skewed to low complexity over residues 445 to 466 and 478 to 495; these read STTY…SSTT and SSPV…SATS. 2 repeat units span residues 471–489 and 499–517. A compositionally biased stretch (low complexity) spans 531–554; sequence TFHGSTTHTKSSTPSTTAALAHTS. Polar residues-rich tracts occupy residues 555–575 and 608–648; these read YHSS…TISG and STPS…SPDT. Over residues 654 to 669 the composition is skewed to low complexity; that stretch reads SMTSSGVSEESTTSHS. Copy 4 of the repeat occupies 662–680; the sequence is EESTTSHSRPGSTHTTAFP. Composition is skewed to polar residues over residues 670–715 and 722–737; these read RPGS…TASS and TFHS…LLPD. An N-linked (GlcNAc...) asparagine glycan is attached at asparagine 738. Disordered stretches follow at residues 749 to 4847, 4887 to 5034, 5048 to 5071, and 5093 to 5112; these read MPVH…HFTT, SSRS…THTV, STAF…TASD, and ASSS…TSPS. Polar residues-rich tracts occupy residues 751 to 783 and 792 to 842; these read VHSS…WPSS and TTTS…TQTM. Copy 5 of the repeat occupies 827–845; the sequence is EESTTYHSSPGSTQTMHFP. Residues 859-877 are compositionally biased toward low complexity; sequence TSHSSTTHTISSAPSTTSA. Composition is skewed to polar residues over residues 884-899 and 928-970; these read SYHS…HFPD and RSTT…TTFH. Low complexity predominate over residues 971 to 1007; that stretch reads SSPRSPATTLSPASTTSSGVSEESTTSRSRPGSTHTT. The segment covering 1009 to 1021 has biased composition (polar residues); it reads FPDSTTTPGLSRH. Over residues 1022-1065 the composition is skewed to low complexity; the sequence is STTSHSSPGSTDTTLLPASTTTSGPSQESTTSHSSSGSTDTALS. Composition is skewed to polar residues over residues 1066 to 1101 and 1108 to 1138; these read PGST…TSSG and RVHS…TAFQ. Over residues 1139 to 1157 the composition is skewed to low complexity; that stretch reads THPASTHTTPSPPSTATAP. Repeat unit 6 spans residues 1159–1177; sequence EESTTYHRSPGSTPTTHFP. Composition is skewed to polar residues over residues 1160-1184 and 1191-1207; these read ESTT…TTSG and IFHS…SSAH. Low complexity-rich tracts occupy residues 1208-1220, 1229-1241, and 1249-1262; these read STTS…TTSR, TTLP…PGLS, and SSPR…SPAS. Composition is skewed to polar residues over residues 1271–1324, 1331–1357, and 1364–1377; these read ESTT…TTSV, TFHS…TEES, and PAST…TLTT. Low complexity-rich tracts occupy residues 1384 to 1396 and 1411 to 1438; these read STTF…STGT and ESTP…SLSE. Polar residues predominate over residues 1439 to 1448; sequence KSTTFYTSPR. Residues 1458-1481 are compositionally biased toward low complexity; sequence TTTSSGVSEESSTSHSQPGSTHTT. Copy 7 of the repeat occupies 1466 to 1484; that stretch reads EESSTSHSQPGSTHTTAFP. The span at 1483–1537 shows a compositional bias: polar residues; sequence FPDSTTTSDLSQEPTTSHSSQGSTEATLSPGSTTASSLGQQSTTFHSSPGDTETT. Low complexity predominate over residues 1552-1568; sequence STPTHSSTGSLHTTLTP. 2 stretches are compositionally biased toward polar residues: residues 1569 to 1586 and 1606 to 1630; these read ASST…FQSW and VSTT…TTLG. Repeat 8 spans residues 1633–1651; the sequence is EESTTVHSSPGATGTALFP. Over residues 1653–1708 the composition is skewed to polar residues; sequence RSATSVLVGEPTTSPISSGSTETTALPGSTTTAGLSEKSTTFYSSPRSPDTTLSPA. Low complexity predominate over residues 1709-1724; the sequence is STTSSGVSEESTTSHS. Repeat unit 9 spans residues 1717–1735; sequence EESTTSHSRPGSTHTTAFP. Composition is skewed to polar residues over residues 1725 to 1797 and 1805 to 1840; these read RPGS…TTAS and PVHS…SSKD. Asparagine 1793 is a glycosylation site (N-linked (GlcNAc...) asparagine). Low complexity-rich tracts occupy residues 1856–1877 and 1889–1906; these read STTS…SSTT and SSPV…STTS. 2 consecutive repeat copies span residues 1882–1900 and 1910–1928. A compositionally biased stretch (polar residues) spans 1914-1935; that stretch reads AYHSSPGSTQTMHFPESSTASG. Residues 1943 to 1959 show a composition bias toward low complexity; it reads SHSSTTHTISSPPSTTS. Composition is skewed to polar residues over residues 1967-1982 and 2011-2053; these read SYHS…HFPD and RSTT…TTFH. Residues 2054–2082 show a composition bias toward low complexity; that stretch reads SSPRSPATTLSPASTTSSGVSEESTTSHS. The stretch at 2075 to 2093 is repeat 12; it reads EESTTSHSRPGSTHTTAFP. The segment covering 2083–2104 has biased composition (polar residues); it reads RPGSTHTTAFPDSTTTPGLSRH. Residues 2105 to 2130 are compositionally biased toward low complexity; it reads STTSHSSPGSTDTTLLPASTTTSGPS. Composition is skewed to polar residues over residues 2131-2184 and 2191-2221; these read QEST…TSSG and RVHS…TAFQ. The span at 2222–2240 shows a compositional bias: low complexity; that stretch reads THPASTHTTPSPPSTATAP. Copy 13 of the repeat occupies 2242 to 2260; sequence EESTTYHRSPGSTPTTHFP. Composition is skewed to polar residues over residues 2243–2267 and 2274–2290; these read ESTT…TTSG and IFHS…SSAH. 3 stretches are compositionally biased toward low complexity: residues 2291-2303, 2312-2324, and 2332-2345; these read STTS…TTSR, TTLP…PGLS, and SSPR…SPAS. The span at 2354 to 2392 shows a compositional bias: polar residues; sequence ESTTSRSQPGSTHSTVSPASTTTPGLSEESTTVYSSSPG. The segment covering 2393-2407 has biased composition (low complexity); sequence STETTVFPRTPTTSV. Composition is skewed to polar residues over residues 2414–2440 and 2447–2460; these read TFHS…TEES and PAST…TLTT. Low complexity-rich tracts occupy residues 2467–2483 and 2494–2521; these read STTF…TLSP and ESTP…SLSE. Polar residues predominate over residues 2522–2531; it reads KSTTFYTSPR. The span at 2541–2564 shows a compositional bias: low complexity; that stretch reads TTTSSGVSEESSTSHSQPGSTHTT. Repeat unit 14 spans residues 2549 to 2567; the sequence is EESSTSHSQPGSTHTTAFP. Residues 2566–2578 show a composition bias toward polar residues; that stretch reads FPDSTTTPGLSRH. A compositionally biased stretch (low complexity) spans 2579–2604; the sequence is STTSHSSPGSTDTTLLPASTTTSGPS. 2 stretches are compositionally biased toward polar residues: residues 2605–2658 and 2665–2695; these read QEST…TSSG and RVHS…TTFQ. Positions 2696–2714 are enriched in low complexity; the sequence is THPASTHTTPSPPSTATAP. Repeat unit 15 spans residues 2716–2734; it reads EESTTYHRSPGSTPTTHFP. Composition is skewed to polar residues over residues 2717–2741 and 2748–2764; these read ESTT…TTSG and IFHS…SSAH. Composition is skewed to low complexity over residues 2765-2777, 2786-2798, and 2806-2819; these read STTS…TTSR, TTLP…PGLS, and SSPR…SPAS. 3 stretches are compositionally biased toward polar residues: residues 2828 to 2881, 2888 to 2914, and 2921 to 2934; these read ESTT…TTSV, TFHS…TEES, and PAST…TLTT. 2 stretches are compositionally biased toward low complexity: residues 2941 to 2957 and 2968 to 2995; these read STTF…TLSP and ESTP…SLSE. Polar residues predominate over residues 2996-3005; it reads KSTTFYTSPR. The span at 3015–3038 shows a compositional bias: low complexity; the sequence is TTTSSGVSEESSTSHSQPGSTHTT. Copy 16 of the repeat occupies 3023–3041; it reads EESSTSHSQPGSTHTTAFP. A compositionally biased stretch (polar residues) spans 3040–3094; that stretch reads FPDSTTTSGLSQEPTASHSSQGSTEATLSPGSTTASSLGQQSTTFHSSPGDTETT. A compositionally biased stretch (low complexity) spans 3109–3125; that stretch reads STPTHSSTGSLHTTLTP. Composition is skewed to polar residues over residues 3126 to 3143 and 3163 to 3187; these read ASST…FQSW and VSTT…TTLG. Repeat unit 17 spans residues 3190-3208; that stretch reads EESTTVHSSPGATGTALFP. Residues 3210–3265 are compositionally biased toward polar residues; the sequence is RSATSVLVGEPTTSPISSGSTETTALPGSTTTAGLSEKSTTFYSSPRSPDTTLSPA. Positions 3266 to 3281 are enriched in low complexity; the sequence is STTSSGVSEESTTSHS. The stretch at 3274–3292 is repeat 18; sequence EESTTSHSRPGSTHTTAFP. Polar residues-rich tracts occupy residues 3282-3354 and 3362-3397; these read RPGS…TTAS and PVHS…NSKD. An N-linked (GlcNAc...) asparagine glycan is attached at asparagine 3350. Low complexity-rich tracts occupy residues 3413-3434 and 3446-3463; these read STTS…SSTT and SSPV…STTS. Repeat copies occupy residues 3439–3457 and 3467–3485. The span at 3468-3482 shows a compositional bias: polar residues; it reads ESTTYHSSPGSTQTM. Residues 3499–3517 are compositionally biased toward low complexity; it reads TSHSSTTHTISSAPSTTSA. Composition is skewed to polar residues over residues 3524–3539 and 3568–3610; these read SYHS…HFPD and RSTT…TTFH. Residues 3611 to 3639 are compositionally biased toward low complexity; the sequence is SSPRSPATTLSPASTTSSGVSEESTTSHS. The stretch at 3632-3650 is repeat 21; that stretch reads EESTTSHSRPGSTHTTAFP. Residues 3640–3661 are compositionally biased toward polar residues; that stretch reads RPGSTHTTAFPDSTTTPGLSRH. Over residues 3662 to 3705 the composition is skewed to low complexity; sequence STTSHSSPGSTDTTLLPASTTTSGSSQESTTSHSSSGSTDTALS. 2 stretches are compositionally biased toward polar residues: residues 3706–3741 and 3748–3778; these read PGST…TSSG and RVHS…TAFQ. Residues 3779–3797 are compositionally biased toward low complexity; it reads THPASTHTTPSPPSTATAP. The stretch at 3799–3817 is repeat 22; sequence EESTTYHRSPGSTPTTHFP. Polar residues-rich tracts occupy residues 3800-3824 and 3831-3847; these read ESTT…TTSG and IFHS…SSAH. 3 stretches are compositionally biased toward low complexity: residues 3848–3860, 3869–3881, and 3889–3902; these read STTS…TTSR, TTLP…PGLS, and SSPR…SPAS. Polar residues-rich tracts occupy residues 3911 to 3963, 3971 to 3997, and 4004 to 4017; these read ESTT…TTTS, TFHS…TEES, and PAST…TLTT. 2 stretches are compositionally biased toward low complexity: residues 4024–4036 and 4051–4078; these read STTF…STGT and ESTP…SLSE. Residues 4079 to 4088 are compositionally biased toward polar residues; that stretch reads KSTTFYTSPR. A compositionally biased stretch (low complexity) spans 4098–4121; that stretch reads TTTSSGVSEESSTSHSQPGSTHTT. Repeat unit 23 spans residues 4106 to 4124; it reads EESSTSHSQPGSTHTTAFP. Residues 4123–4177 are compositionally biased toward polar residues; it reads FPDSTTTSGLSQEPTTSHSSQGSTEATLSPGSTTASSLGQQSTTFHSSPGDTETT. Low complexity predominate over residues 4192–4208; it reads STPTHSSTGSLHTTLTP. The segment covering 4209-4226 has biased composition (polar residues); that stretch reads ASSTSTGLQEESTTFQSW. Low complexity predominate over residues 4227-4249; that stretch reads PSSSDTTPSPPSTTAVPVEVSTT. A compositionally biased stretch (polar residues) spans 4250–4270; it reads YHSRPSSTPTTHFSASSTTLG. Repeat unit 24 spans residues 4273–4291; sequence EESTTVHSSPGATGTALFP. The span at 4293-4348 shows a compositional bias: polar residues; it reads RSATSVLVGEPTTSPISSGSTETTALPGSTTTAGLSEKSTTFYSSPRSPDTTLSPA. A compositionally biased stretch (low complexity) spans 4349–4364; the sequence is STTSSGVSEESTTSHS. 2 stretches are compositionally biased toward polar residues: residues 4369-4437 and 4445-4480; these read MHTT…TTAS and PVHS…NSKD. Residue asparagine 4433 is glycosylated (N-linked (GlcNAc...) asparagine). Low complexity-rich tracts occupy residues 4496-4517 and 4529-4546; these read STTS…SSTT and SSPV…STTS. 2 tandem repeats follow at residues 4522 to 4540 and 4550 to 4568. Positions 4551–4571 are enriched in polar residues; the sequence is ESTTYHSSPGSTQTMHFPESN. A glycan (N-linked (GlcNAc...) asparagine) is linked at asparagine 4571. The span at 4582–4600 shows a compositional bias: low complexity; that stretch reads TSHSSTTHTISSAPSTTSA. Composition is skewed to polar residues over residues 4607 to 4622 and 4651 to 4688; these read SYHS…HFPD and RSTT…LSEK. 2 stretches are compositionally biased toward low complexity: residues 4689-4710 and 4722-4739; these read STTF…SSTT and SSPV…STTS. 2 tandem repeats follow at residues 4715-4733 and 4743-4761. Over residues 4747–4768 the composition is skewed to polar residues; that stretch reads AYHSSPGSTQTMHFPESSTASG. Over residues 4776–4792 the composition is skewed to low complexity; sequence SHSSTTHTISSPPSTTS. Polar residues-rich tracts occupy residues 4800 to 4814 and 4887 to 4917; these read SYHS…THFP and SSRS…SQAE. The span at 4918–4931 shows a compositional bias: low complexity; the sequence is STHTTAFPASTTTS. 2 stretches are compositionally biased toward polar residues: residues 4932–5024 and 5048–5061; these read GLSQ…STPF and STAF…TGTT. Residues 5094–5112 show a composition bias toward low complexity; it reads SSSTSGLTEESTTFHTSPS. In terms of domain architecture, EGF-like spans 5116-5154; it reads TIVSTESLETLAPGLCQEGQIWNGKQCVCPQGYVGYQCL. An intrachain disulfide couples cysteine 5144 to cysteine 5153. The SEA domain maps to 5168–5275; sequence LNATLGMTVK…TRTTLLDPDS (108 aa). Residues asparagine 5169, asparagine 5182, asparagine 5197, asparagine 5228, and asparagine 5264 are each glycosylated (N-linked (GlcNAc...) asparagine). A Cleavage motif motif is present at residues 5226–5233; sequence LLNGSIVV. Residues 5381-5401 form a helical membrane-spanning segment; that stretch reads GIVGAVMAVLLLALIILIILF. Topologically, residues 5402–5478 are cytoplasmic; that stretch reads SLSQRKRHRE…QRPEMVASTV (77 aa).

Ubiquitous, with higher expression in colon. Down-regulated in colorectal cancer as well as in the colon of patients with ulcerative colitis (UC) and Crohn's disease (CD).

It is found in the membrane. In terms of biological role, involved in epithelial cell protection, adhesion modulation, and signaling. May be involved in epithelial cell growth regulation. Stimulated by both cytokine TNF-alpha and TGF-beta in intestinal epithelium. The protein is Mucin-12 (MUC12) of Homo sapiens (Human).